A 198-amino-acid chain; its full sequence is Recombination protein RecR (198 aa).

The C4-type zinc finger occupies 57-72; sequence CSVCNNITDLDPCHIC. In terms of domain architecture, Toprim spans 80–175; the sequence is SIICVVQEPR…RVTRIAHGLP (96 aa).

This sequence belongs to the RecR family.

Functionally, may play a role in DNA repair. It seems to be involved in an RecBC-independent recombinational process of DNA repair. It may act with RecF and RecO. The sequence is that of Recombination protein RecR from Brevibacillus brevis (strain 47 / JCM 6285 / NBRC 100599).